A 1604-amino-acid polypeptide reads, in one-letter code: Collagen alpha-1(XVI) chain (1604 aa).

The N-terminal stretch at 1-21 (MWVSWAPGLWLLGLWATFGHG) is a signal peptide. The N-linked (GlcNAc...) asparagine glycan is linked to Asn-47. The Laminin G-like domain occupies 50-231 (GFNLIHRLSL…LQQVHIYCDP (182 aa)). The tract at residues 232–374 (ELVLEEGCCE…SPDAPLQCAE (143 aa)) is nonhelical region 10 (NC10). Positions 301–311 (AERGAKVHQET) are enriched in basic and acidic residues. Residues 301–509 (AERGAKVHQE…KGEKGDPCEV (209 aa)) form a disordered region. N-linked (GlcNAc...) asparagine glycosylation is present at Asn-327. Residues 375–423 (GPKGEKGESGALGPSGLPGSTGEKGQKGEKGDGGIKGVPGKPGRDGRPG) form the Collagen-like 1 domain. Positions 375-506 (GPKGEKGESG…PGVKGEKGDP (132 aa)) are triple-helical region 9 (COL9) with 3 imperfections. Residues 383–397 (SGALGPSGLPGSTGE) are compositionally biased toward low complexity. Positions 398–407 (KGQKGEKGDG) are enriched in basic and acidic residues. The span at 449 to 460 (PGPPGLPGPPGI) shows a compositional bias: pro residues. The span at 486–495 (GKEGPGGKPG) shows a compositional bias: gly residues. The tract at residues 507-521 (CEVCPTLPEGFQNFV) is nonhelical region 9 (NC9). The triple-helical region 8 (COL8) with 1 imperfection stretch occupies residues 522-555 (GLPGKPGPKGEPGDPVPARGDPGIQGIKGEKGEP). A Cell attachment site motif is present at residues 540–542 (RGD). Residues 556–572 (CLSCSSVVGAQHLVSST) are nonhelical region 8 (NC8). The interval 573–631 (GASGDVGSPGFGLPGLPGRAGVPGLKGEKGNFGEAGPAGSPGPPGPVGPAGIKGAKGEP) is triple-helical region 7 (COL7) with 1 imperfection. 2 Collagen-like domains span residues 573-633 (GASG…EPCE) and 667-721 (GLPG…GEKG). The segment at 604 to 917 (FGEAGPAGSP…PPGIPGPPGP (314 aa)) is disordered. Residues 632 to 652 (CEPCPALSNLQDGDVRVVALP) are nonhelical region 7 (NC7). The segment at 653–723 (GPSGEKGEPG…AGPKGEKGDG (71 aa)) is triple-helical region 6 (COL6) with 1 imperfection. Positions 674–684 (KAGERGLKGQK) are enriched in basic and acidic residues. A compositionally biased stretch (low complexity) spans 686 to 702 (DAGNPGDPGTPGTTGRP). Positions 724–738 (CTACPSLQGTVTDMA) are nonhelical region 6 (NC6). The triple-helical region 5 (COL5) with 3 imperfections stretch occupies residues 739-876 (GRPGQPGPKG…RGEKGEPGEC (138 aa)). Low complexity-rich tracts occupy residues 766-781 (LPGV…VQGE), 792-808 (PQGE…QGLP), and 826-846 (PGVK…SGPP). Residues 788-840 (GVQGPQGEPGAPGLPGIQGLPGPRGPPGPTGEKGAQGSPGVKGATGPVGPPGA) enclose the Collagen-like 4 domain. Positions 864 to 873 (KGPRGEKGEP) are enriched in basic and acidic residues. The nonhelical region 5 (NC5) stretch occupies residues 877–887 (SCPSQGDLIFS). Residues 888 to 938 (GMPGAPGLWMGSSWQPGPQGPPGIPGPPGPPGVPGLQGVPGNNGLPGQPGL) enclose the Collagen-like 5 domain. Residues 888-939 (GMPGAPGLWMGSSWQPGPQGPPGIPGPPGPPGVPGLQGVPGNNGLPGQPGLT) are triple-helical region 4 (COL4) with 2 imperfections. Over residues 905–917 (PQGPPGIPGPPGP) the composition is skewed to pro residues. Positions 940-973 (AELGSLPIEQHLLKSICGDCVQGQRAHPGYLVEK) are nonhelical region 4 (NC4). The segment at 974–988 (GEKGDQGIPGVPGLD) is triple-helical region 3 (COL3). The tract at residues 989–1011 (NCAQCFLSLERPRAEEARGDNSE) is nonhelical region 3 (NC3). 2 disordered regions span residues 1001–1429 (RAEE…VPGS) and 1468–1517 (MAAA…PGTK). The short motif at 1006 to 1008 (RGD) is the Cell attachment site element. The interval 1012–1433 (GDPGCVGSPG…PGVPGSMGDM (422 aa)) is triple-helical region 2 (COL2) with 2 imperfections. Residues 1018-1075 (GSPGLPGPPGLPGQRGEEGPPGMRGSPGPPGPIGPPGFPGAVGSPGLPGLQGERGLTG) form the Collagen-like 6 domain. 3 stretches are compositionally biased toward pro residues: residues 1044–1055 (PGPPGPIGPPGF), 1160–1169 (FPGPPGPPGF), and 1199–1208 (SPGPPGPPGI). The span at 1217 to 1226 (LDGKDGKPGL) shows a compositional bias: basic and acidic residues. Residues 1227–1229 (RGD) carry the Cell attachment site motif. Low complexity predominate over residues 1271 to 1284 (RPGAEGEPGAMGPQ). Pro residues-rich tracts occupy residues 1286–1302 (RPGP…PGQP) and 1330–1342 (QPGP…PPGE). Residues 1369–1378 (DPGAAGQKGQ) are compositionally biased toward low complexity. Over residues 1386–1395 (GMPGGPGKSG) the composition is skewed to gly residues. Over residues 1420–1429 (SPGLPGVPGS) the composition is skewed to low complexity. Residues 1434 to 1472 (VNYDEIKRFIRQEIIKMFDERMAYYTSRMQFPMEMAAAP) are nonhelical region 2 (NC2). Collagen-like domains follow at residues 1472 to 1524 (PGRP…GDIG) and 1528 to 1576 (AGEN…GKAG). The segment at 1473–1578 (GRPGPPGKDG…MGQPGKAGHC (106 aa)) is triple-helical region 1 (COL1) with 2 imperfections. The interval 1579–1604 (NPSDCFGAMPMEQQYPPMKTMKGPFG) is nonhelical region 1 (NC1).

Belongs to the fibril-associated collagens with interrupted helices (FACIT) family. As to quaternary structure, homotrimer. Interacts with FBN1, fibronectin and integrins ITGA1/ITGB1 and ITGA2/ITGB1. Integrin ITGA1/ITGB1 binds to a unique site within COL16A1 located close to its C-terminal end between collagenous domains COL1-COL3. In terms of processing, prolines at the third position of the tripeptide repeating unit (G-X-Y) are hydroxylated in some or all of the chains. Post-translationally, glycosylated. As to expression, in papillary dermis, is a component of specialized fibrillin-1-containing microfibrils, whereas in territorial cartilage matrix, it is localized to a discrete population of thin, weakly banded collagen fibrils in association with other collagens (at protein level). In the placenta, where it is found in the amnion, a membranous tissue lining the amniotic cavity. Within the amnion, it is found in an acellular, relatively dense layer of a complex network of reticular fibers. Also located to a fibroblast layer beneath this dense layer. Exists in tissues in association with other types of collagen.

It localises to the secreted. Its subcellular location is the extracellular space. It is found in the extracellular matrix. Functionally, involved in mediating cell attachment and inducing integrin-mediated cellular reactions, such as cell spreading and alterations in cell morphology. The sequence is that of Collagen alpha-1(XVI) chain (COL16A1) from Homo sapiens (Human).